Here is a 709-residue protein sequence, read N- to C-terminus: Polyribonucleotide nucleotidyltransferase (709 aa).

Mg(2+)-binding residues include Asp487 and Asp493. The KH domain occupies 554–613 (PRIHTMKISSDKIKDVIGKGGAVIRALCEETGTTIEIEDDGTIKIAATEGAAAKEAIRRI). The region spanning 623–691 (GKIYTGKVMR…RQGRIRLSIK (69 aa)) is the S1 motif domain.

Belongs to the polyribonucleotide nucleotidyltransferase family. As to quaternary structure, component of the RNA degradosome, which is a multiprotein complex involved in RNA processing and mRNA degradation. Requires Mg(2+) as cofactor.

The protein resides in the cytoplasm. It catalyses the reaction RNA(n+1) + phosphate = RNA(n) + a ribonucleoside 5'-diphosphate. Its function is as follows. Involved in mRNA degradation. Catalyzes the phosphorolysis of single-stranded polyribonucleotides processively in the 3'- to 5'-direction. This Aliivibrio fischeri (strain ATCC 700601 / ES114) (Vibrio fischeri) protein is Polyribonucleotide nucleotidyltransferase.